A 477-amino-acid chain; its full sequence is Glycogen synthase (477 aa).

ADP-alpha-D-glucose is bound at residue K15.

Belongs to the glycosyltransferase 1 family. Bacterial/plant glycogen synthase subfamily.

It carries out the reaction [(1-&gt;4)-alpha-D-glucosyl](n) + ADP-alpha-D-glucose = [(1-&gt;4)-alpha-D-glucosyl](n+1) + ADP + H(+). It functions in the pathway glycan biosynthesis; glycogen biosynthesis. Synthesizes alpha-1,4-glucan chains using ADP-glucose. The sequence is that of Glycogen synthase from Streptococcus pneumoniae serotype 4 (strain ATCC BAA-334 / TIGR4).